Reading from the N-terminus, the 337-residue chain is Fructose-1,6-bisphosphatase class 1 (337 aa).

Positions 89, 112, 114, and 115 each coordinate Mg(2+). Substrate contacts are provided by residues 115 to 118 (DGSS), asparagine 208, tyrosine 241, and lysine 271. Glutamate 277 contributes to the Mg(2+) binding site.

This sequence belongs to the FBPase class 1 family. As to quaternary structure, homotetramer. The cofactor is Mg(2+).

The protein resides in the cytoplasm. It carries out the reaction beta-D-fructose 1,6-bisphosphate + H2O = beta-D-fructose 6-phosphate + phosphate. The protein operates within carbohydrate biosynthesis; gluconeogenesis. The sequence is that of Fructose-1,6-bisphosphatase class 1 from Psychromonas ingrahamii (strain DSM 17664 / CCUG 51855 / 37).